Here is a 531-residue protein sequence, read N- to C-terminus: MSQEILDQVRRRRTFAIISHPDAGKTTLTEKLLLFSGAIQSAGTVKGKKTGKFATSDWMDIEKQRGISVASSVMQFDYKDHTVNLLDTPGHQDFSEDTYRVLTAVDSALMVIDAAKGVEAQTIKLLNVCRLRNTPIVTFMNKYDREVRDSLELLDEVENILQIRCAPVTWPIGMGKNFKGVYHILNDEIYLFEAGGERLPHEFDIIKGIDNPELEQRFPLEIQQLRDEIELVQAASNEFNLDEFLAGELTPVFFGSAINNFGIQEILNSLIEWAPAPKPRDATVRMVEPDEPKFSGFIFKIQANMDPKHRDRIAFLRVCSGKFERGMKMKHLRINREIAASSVVTFMSHDRELVEEAYAGDIIGIPNHGNIQIGDSFSEGEQLTFTGIPFFAPELFRSVRIKNPLKIKQLQKGLQQLGEEGAVQVFKPMSGADLILGAVGVLQFEVVTSRLANEYGVEAVFDNASIWSARWVSCDDKKKLAEFEKANAGNLAIDAGGNLAYLAPNRVNLGLTQERWPDIVFHETREHSVKL.

The tr-type G domain occupies 10 to 278; it reads RRRRTFAIIS…SLIEWAPAPK (269 aa). Residues 19–26, 87–91, and 141–144 each bind GTP; these read SHPDAGKT, DTPGH, and NKYD.

The protein belongs to the TRAFAC class translation factor GTPase superfamily. Classic translation factor GTPase family. PrfC subfamily.

Its subcellular location is the cytoplasm. Functionally, increases the formation of ribosomal termination complexes and stimulates activities of RF-1 and RF-2. It binds guanine nucleotides and has strong preference for UGA stop codons. It may interact directly with the ribosome. The stimulation of RF-1 and RF-2 is significantly reduced by GTP and GDP, but not by GMP. The chain is Peptide chain release factor 3 from Neisseria meningitidis serogroup A / serotype 4A (strain DSM 15465 / Z2491).